The following is a 339-amino-acid chain: Phenylalanine--tRNA ligase alpha subunit (339 aa).

Glutamate 250 lines the Mg(2+) pocket.

It belongs to the class-II aminoacyl-tRNA synthetase family. Phe-tRNA synthetase alpha subunit type 1 subfamily. Tetramer of two alpha and two beta subunits. Mg(2+) is required as a cofactor.

The protein resides in the cytoplasm. The catalysed reaction is tRNA(Phe) + L-phenylalanine + ATP = L-phenylalanyl-tRNA(Phe) + AMP + diphosphate + H(+). The polypeptide is Phenylalanine--tRNA ligase alpha subunit (Parabacteroides distasonis (strain ATCC 8503 / DSM 20701 / CIP 104284 / JCM 5825 / NCTC 11152)).